The chain runs to 84 residues: Large ribosomal subunit protein bL27 (84 aa).

A disordered region spans residues 1-24 (MAHKKGAASTKNGRDSNSQRLGVK). Positions 9 to 20 (STKNGRDSNSQR) are enriched in polar residues.

The protein belongs to the bacterial ribosomal protein bL27 family.

The polypeptide is Large ribosomal subunit protein bL27 (Nocardioides sp. (strain ATCC BAA-499 / JS614)).